A 79-amino-acid polypeptide reads, in one-letter code: ESX secretion system protein YukD (79 aa).

This sequence belongs to the EsaB family.

Functionally, required for YukE secretion. Probable component or regulator of the ESX/ESAT-6-like secretion system (BsEss). The protein is ESX secretion system protein YukD (yukD) of Bacillus subtilis (strain 168).